The chain runs to 299 residues: ATP phosphoribosyltransferase (299 aa).

It belongs to the ATP phosphoribosyltransferase family. Long subfamily. It depends on Mg(2+) as a cofactor.

It localises to the cytoplasm. The catalysed reaction is 1-(5-phospho-beta-D-ribosyl)-ATP + diphosphate = 5-phospho-alpha-D-ribose 1-diphosphate + ATP. It participates in amino-acid biosynthesis; L-histidine biosynthesis; L-histidine from 5-phospho-alpha-D-ribose 1-diphosphate: step 1/9. With respect to regulation, feedback inhibited by histidine. Catalyzes the condensation of ATP and 5-phosphoribose 1-diphosphate to form N'-(5'-phosphoribosyl)-ATP (PR-ATP). Has a crucial role in the pathway because the rate of histidine biosynthesis seems to be controlled primarily by regulation of HisG enzymatic activity. The protein is ATP phosphoribosyltransferase of Actinobacillus pleuropneumoniae serotype 5b (strain L20).